The primary structure comprises 418 residues: Argininosuccinate synthase (418 aa).

16-24 (AYSGGLDTS) lines the ATP pocket. Residue Tyr95 participates in L-citrulline binding. Residue Gly125 coordinates ATP. L-aspartate is bound by residues Thr127, Asn131, and Asp132. Asn131 serves as a coordination point for L-citrulline. L-citrulline-binding residues include Arg135, Ser183, Glu267, and Tyr279.

Belongs to the argininosuccinate synthase family. Type 1 subfamily. In terms of assembly, homotetramer.

It localises to the cytoplasm. It catalyses the reaction L-citrulline + L-aspartate + ATP = 2-(N(omega)-L-arginino)succinate + AMP + diphosphate + H(+). It participates in amino-acid biosynthesis; L-arginine biosynthesis; L-arginine from L-ornithine and carbamoyl phosphate: step 2/3. This chain is Argininosuccinate synthase, found in Bifidobacterium adolescentis (strain ATCC 15703 / DSM 20083 / NCTC 11814 / E194a).